The following is a 264-amino-acid chain: Diphthine synthase (264 aa).

Residues Leu-10, Asp-87, Val-90, 115–116 (SI), Leu-166, Ala-209, and His-234 each bind S-adenosyl-L-methionine.

Belongs to the diphthine synthase family. As to quaternary structure, homodimer.

It catalyses the reaction 2-[(3S)-amino-3-carboxypropyl]-L-histidyl-[translation elongation factor 2] + 3 S-adenosyl-L-methionine = diphthine-[translation elongation factor 2] + 3 S-adenosyl-L-homocysteine + 3 H(+). It participates in protein modification; peptidyl-diphthamide biosynthesis. Its function is as follows. S-adenosyl-L-methionine-dependent methyltransferase that catalyzes the trimethylation of the amino group of the modified target histidine residue in translation elongation factor 2 (EF-2), to form an intermediate called diphthine. The three successive methylation reactions represent the second step of diphthamide biosynthesis. This is Diphthine synthase from Thermococcus gammatolerans (strain DSM 15229 / JCM 11827 / EJ3).